The following is a 389-amino-acid chain: LL-diaminopimelate aminotransferase (389 aa).

Substrate contacts are provided by Y16 and G41. Residues Y70, 104–105, Y129, N179, Y210, and 239–241 contribute to the pyridoxal 5'-phosphate site; these read SK and SLS. K105, Y129, and N179 together coordinate substrate. N6-(pyridoxal phosphate)lysine is present on K242. Residue R250 coordinates pyridoxal 5'-phosphate. R369 is a substrate binding site.

It belongs to the class-I pyridoxal-phosphate-dependent aminotransferase family. LL-diaminopimelate aminotransferase subfamily. Homodimer. The cofactor is pyridoxal 5'-phosphate.

The enzyme catalyses (2S,6S)-2,6-diaminopimelate + 2-oxoglutarate = (S)-2,3,4,5-tetrahydrodipicolinate + L-glutamate + H2O + H(+). It participates in amino-acid biosynthesis; L-lysine biosynthesis via DAP pathway; LL-2,6-diaminopimelate from (S)-tetrahydrodipicolinate (aminotransferase route): step 1/1. In terms of biological role, involved in the synthesis of meso-diaminopimelate (m-DAP or DL-DAP), required for both lysine and peptidoglycan biosynthesis. Catalyzes the direct conversion of tetrahydrodipicolinate to LL-diaminopimelate. This chain is LL-diaminopimelate aminotransferase, found in Nitratidesulfovibrio vulgaris (strain DSM 19637 / Miyazaki F) (Desulfovibrio vulgaris).